Reading from the N-terminus, the 51-residue chain is U-Asilidin(1)-Eru1a (51 aa).

Positions 1 to 23 (MANYIDVLSFLAIICATVLATLA) are cleaved as a signal peptide. 3 disulfides stabilise this stretch: cysteine 26-cysteine 40, cysteine 33-cysteine 44, and cysteine 39-cysteine 49.

This sequence belongs to the asilidin-1 family. Expressed by the venom gland. The most highly expressed peptides U-Asilidin1-Mar1a is around 3000 times higher expressed in the venom thoracic glands compared to its body tissues.

The protein localises to the secreted. Induces neurotoxic effect on honeybees, including slow movements, disorientation and paralysis. Since it provokes similar symptoms than omega-atracotoxin, it is probable that it acts in the same way by inhibiting voltage-gated calcium channels. This chain is U-Asilidin(1)-Eru1a, found in Eutolmus rufibarbis (Golden-tabbed robberfly).